We begin with the raw amino-acid sequence, 418 residues long: Thermolabile hemolysin (418 aa).

The N-terminal stretch at 1-19 (MMKKTITLLTALLPLASAV) is a signal peptide. The active-site Nucleophile is S153. Active-site residues include D390 and H393.

Belongs to the 'GDSL' lipolytic enzyme family. There are two forms of LDH. The LDH(S) may be a protein in which 13 residues of the N-terminal of LDH(L) are deleted.

The protein localises to the secreted. Phospholipase hydrolyzing both fatty acid esters of phospholipid, i.e. it hydrolyzes phosphatidylcholine (PC) to lysophosphatidylcholine (LPC) and then LPC to glycerophosphorylcholine (GPC). The polypeptide is Thermolabile hemolysin (Vibrio parahaemolyticus serotype O3:K6 (strain RIMD 2210633)).